The primary structure comprises 431 residues: Homogentisate 1,2-dioxygenase (431 aa).

The active-site Proton acceptor is the His-286. His-329 and Glu-335 together coordinate Fe cation. The homogentisate site is built by Tyr-344 and His-365. Fe cation is bound at residue His-365.

The protein belongs to the homogentisate dioxygenase family. Hexamer; dimer of trimers. The cofactor is Fe cation.

It carries out the reaction homogentisate + O2 = 4-maleylacetoacetate + H(+). It participates in amino-acid degradation; L-phenylalanine degradation; acetoacetate and fumarate from L-phenylalanine: step 4/6. Functionally, involved in the catabolism of homogentisate (2,5-dihydroxyphenylacetate or 2,5-OH-PhAc), a central intermediate in the degradation of phenylalanine and tyrosine. Catalyzes the oxidative ring cleavage of the aromatic ring of homogentisate to yield maleylacetoacetate. The sequence is that of Homogentisate 1,2-dioxygenase from Pseudomonas fluorescens (strain Pf0-1).